The following is a 1085-amino-acid chain: MDNTDEPQKKVFKARKTMRASDRQQLEAVYKAKEDLLKTTEVKLLNGKHENGDSDLNSPLSNTDCTEDKREVNGLVDSNEISEIKRPESRAESVVSDLEPKPLSPVNVTREQDTDVALVCEAENRVLGSNKVNFHEENNIKNRLDQRESDTPSGENKSNCDNSFSPEEKGKTNDITIISNSPVEEKKKAGEIIVEDTVGEEAISSSMETDQEPKNERDGTAGLSETVVEKAVDESSESILENTDSMEADEIIPILEKLAPAEDEMSCFSKSALLPVDDTAPDLEEKMDNCLSSPLKQESNESLPKEAFLVLSDEEDPCDEREHAEVILPNKSGLPEEVEKSEEEDKEREVVHKEEEKHTERGEVSRRKRSKSEDMDSVHSKRRRFVGEEDYEAEFQVKITARRDVDQKLEKVIQRVLEEKLAALQCAVFDKTLADLKMRIEKVECNKRHKTVLTELQAKITRLTKRFGAAKEDMKKKQENTPNPSLSSGKAASSTANANNLTYRNITTVRQMLESKRNVGDSKPATLQAPVSAAPASSLAAPQTPASGHPKPQTPVTSSPLTTTVISTANTATVVGTSQVPSGSTQPMSVSLQSLPVILHVPVAVSSQPQLLQGHAGTLVTNQQSGSVEFISVQSSSTVGSLTKTAVSLASTNTTKPNNSPSVSSPGVQRNSPASAGSVRTTLAVQAVSTTHPVAQTTRTSLPTVGTSGLHNSTSSRGPIHMKIPLSAFNSTAPTEPPTITAPRVENQTSRPPTDSSANKRTAEGPTQSVKVTGSDSGGVIDLTLDDEDDVSSQAEAKKQNQTASTAQSIPTQPLSRPLPPLQPNPLQQTGVPTSGPSQTTIHVLPTAPTTVNVTHRPVTQTAAKLPIPRTPTNHQVVYTTIPAPPAQNSVRGAVMPSPSLRPVNPQTGSMTVRMPQTTAYVVNNGLTLGSGAPQLTVHHRPPQVHAEPPRPVHPAPLPEAPQPPRLPPEAANTSLPQKPQLKLARVQSQNGIVLSWSVIEVDRSCASVDSYHLYAYHEDPSATMPSQWKKIGEVKALPLPMACTLTQFVSGSKYYFAVRAKDIYGRFGPFCDPQSTDVISSQSS.

9 disordered regions span residues 1–22, 47–109, 127–245, 329–381, 469–499, 517–560, 650–843, 889–910, and 932–975; these read MDNT…RASD, GKHE…VNVT, LGSN…NTDS, PNKS…VHSK, AAKE…ANAN, RNVG…TSSP, ASTN…TTIH, NSVR…QTGS, and GAPQ…ANTS. Positions 54 to 64 are enriched in polar residues; it reads SDLNSPLSNTD. 2 stretches are compositionally biased toward basic and acidic residues: residues 82–91 and 133–150; these read SEIKRPESRA and NFHE…RESD. 2 stretches are compositionally biased toward polar residues: residues 151–165 and 173–182; these read TPSG…NSFS and NDITIISNSP. Basic and acidic residues-rich tracts occupy residues 347-379 and 469-479; these read EREV…DSVH and AAKEDMKKKQE. Positions 446 to 480 form a coiled coil; it reads NKRHKTVLTELQAKITRLTKRFGAAKEDMKKKQEN. Composition is skewed to low complexity over residues 487–499, 529–547, and 651–666; these read SSGK…ANAN, APVS…TPAS, and STNT…VSSP. Positions 667–717 are enriched in polar residues; the sequence is GVQRNSPASAGSVRTTLAVQAVSTTHPVAQTTRTSLPTVGTSGLHNSTSSR. Positions 732-743 are enriched in low complexity; it reads TAPTEPPTITAP. Polar residues-rich tracts occupy residues 746-775, 792-810, and 830-843; these read ENQT…VTGS, SSQA…AQSI, and TGVP…TTIH. Positions 950 to 968 are enriched in pro residues; it reads PRPVHPAPLPEAPQPPRLP. The Fibronectin type-III domain maps to 976–1082; sequence LPQKPQLKLA…DPQSTDVISS (107 aa).

Belongs to the MCAF family.

The protein localises to the nucleus. Its function is as follows. Recruiter that couples transcriptional factors to general transcription apparatus and thereby modulates transcription regulation and chromatin formation. Can both act as an activator or a repressor depending on the context. Mediates MBD1-dependent transcriptional repression, probably by recruiting complexes containing histone methyltransferase activity. May belong to a complex that represses transcription and couples DNA methylation and histone H3 'Lys-9' trimethylation (H3K9me3). The protein is Activating transcription factor 7-interacting protein 1 (ATF7IP) of Gallus gallus (Chicken).